The chain runs to 216 residues: Sperm microtubule inner protein 8 (216 aa).

As to quaternary structure, microtubule inner protein component of sperm flagellar doublet microtubules.

It is found in the cytoplasm. Its subcellular location is the cytoskeleton. It localises to the flagellum axoneme. Microtubule inner protein (MIP) part of the dynein-decorated doublet microtubules (DMTs) in flagellum axoneme. May serve to reinforce and thus stabilize the microtubule structure in the sperm flagella. The protein is Sperm microtubule inner protein 8 (Spmip8) of Rattus norvegicus (Rat).